A 218-amino-acid chain; its full sequence is Pyridoxine/pyridoxamine 5'-phosphate oxidase (218 aa).

Substrate-binding positions include 14-17 (RREY) and lysine 72. Residues 67–72 (RIVLLK), 82–83 (YT), arginine 88, lysine 89, and glutamine 111 contribute to the FMN site. Substrate is bound by residues tyrosine 129, arginine 133, and serine 137. Residues 146–147 (QS) and tryptophan 191 contribute to the FMN site. 197-199 (RLH) lines the substrate pocket. Arginine 201 contributes to the FMN binding site.

It belongs to the pyridoxamine 5'-phosphate oxidase family. In terms of assembly, homodimer. It depends on FMN as a cofactor.

It carries out the reaction pyridoxamine 5'-phosphate + O2 + H2O = pyridoxal 5'-phosphate + H2O2 + NH4(+). The enzyme catalyses pyridoxine 5'-phosphate + O2 = pyridoxal 5'-phosphate + H2O2. Its pathway is cofactor metabolism; pyridoxal 5'-phosphate salvage; pyridoxal 5'-phosphate from pyridoxamine 5'-phosphate: step 1/1. The protein operates within cofactor metabolism; pyridoxal 5'-phosphate salvage; pyridoxal 5'-phosphate from pyridoxine 5'-phosphate: step 1/1. Its function is as follows. Catalyzes the oxidation of either pyridoxine 5'-phosphate (PNP) or pyridoxamine 5'-phosphate (PMP) into pyridoxal 5'-phosphate (PLP). The polypeptide is Pyridoxine/pyridoxamine 5'-phosphate oxidase (Escherichia coli O157:H7).